The primary structure comprises 459 residues: tRNA modification GTPase MnmE (459 aa).

(6S)-5-formyl-5,6,7,8-tetrahydrofolate contacts are provided by Arg-20, Glu-85, and Arg-124. Positions 221–380 (GLSTVIIGRP…LEEAIQSLFY (160 aa)) constitute a TrmE-type G domain. Asn-231 is a binding site for K(+). GTP is bound by residues 231-236 (NVGKSS), 250-256 (TDIPGTT), and 275-278 (DTAG). Ser-235 serves as a coordination point for Mg(2+). Positions 250, 252, and 255 each coordinate K(+). Thr-256 lines the Mg(2+) pocket. Lys-459 contacts (6S)-5-formyl-5,6,7,8-tetrahydrofolate.

The protein belongs to the TRAFAC class TrmE-Era-EngA-EngB-Septin-like GTPase superfamily. TrmE GTPase family. In terms of assembly, homodimer. Heterotetramer of two MnmE and two MnmG subunits. Requires K(+) as cofactor.

The protein resides in the cytoplasm. Its function is as follows. Exhibits a very high intrinsic GTPase hydrolysis rate. Involved in the addition of a carboxymethylaminomethyl (cmnm) group at the wobble position (U34) of certain tRNAs, forming tRNA-cmnm(5)s(2)U34. The chain is tRNA modification GTPase MnmE from Bacillus subtilis (strain 168).